Consider the following 2180-residue polypeptide: Genome polyprotein (2180 aa).

Disordered regions lie at residues 507–529 (DGAD…AKDP), 624–679 (QPQK…YPIQ), 703–809 (KRAK…NTLP), and 822–848 (SEVE…PPKM). The stretch at 573–624 (SKNQGLIRVLEQQLQDLNKRICPPGTSLFHFFDQQKSEMASLKEQIRLLKEQ) forms a coiled coil. 2 stretches are compositionally biased toward polar residues: residues 631–643 (DTPS…QPFH) and 670–679 (PSLFSQYPIQ). The segment covering 703–716 (KRAKKKLQKDEVKQ) has biased composition (basic and acidic residues). A compositionally biased stretch (polar residues) spans 759 to 771 (SEDTSSQSYISTE). Over residues 784–807 (SEESTQLSQLSSSSNDSPENNENT) the composition is skewed to low complexity. Acidic residues predominate over residues 822–832 (SEVEDEVDGMT). The CCHC-type zinc-finger motif lies at 1113–1126 (CFTCGKIGHFSRNC). Aspartate 1227 acts as the For protease activity; shared with dimeric partner in catalysis. 3 residues coordinate Mg(2+): aspartate 1480, aspartate 1543, and aspartate 1544. 3 disordered regions span residues 1824–1848 (RRTR…YKLS), 2115–2145 (NIVK…KNKC), and 2161–2180 (YSTK…EPCI). Residues 1828–1847 (SNSTKSKADSSQSTGSSYKL) show a composition bias toward polar residues. Positions 2120–2145 (SPRKRKGKAKSKSSTRNEKRRAKNKC) are enriched in basic residues. The span at 2163–2180 (TKPSTPSWTQDSSSEPCI) shows a compositional bias: polar residues.

This sequence belongs to the Petuviruses genome polyprotein family.

It carries out the reaction DNA(n) + a 2'-deoxyribonucleoside 5'-triphosphate = DNA(n+1) + diphosphate. Its function is as follows. Encodes presumably for at least four polypeptides: Movement protein (MP), capsid protein (CP), Protease (PR), and reverse transcriptase (RT). The protein is Genome polyprotein of Petunia (PVCV).